The primary structure comprises 512 residues: Bifunctional purine biosynthesis protein PurH (512 aa).

The MGS-like domain maps to Met-1–Val-150.

Belongs to the PurH family.

The enzyme catalyses (6R)-10-formyltetrahydrofolate + 5-amino-1-(5-phospho-beta-D-ribosyl)imidazole-4-carboxamide = 5-formamido-1-(5-phospho-D-ribosyl)imidazole-4-carboxamide + (6S)-5,6,7,8-tetrahydrofolate. The catalysed reaction is IMP + H2O = 5-formamido-1-(5-phospho-D-ribosyl)imidazole-4-carboxamide. It functions in the pathway purine metabolism; IMP biosynthesis via de novo pathway; 5-formamido-1-(5-phospho-D-ribosyl)imidazole-4-carboxamide from 5-amino-1-(5-phospho-D-ribosyl)imidazole-4-carboxamide (10-formyl THF route): step 1/1. The protein operates within purine metabolism; IMP biosynthesis via de novo pathway; IMP from 5-formamido-1-(5-phospho-D-ribosyl)imidazole-4-carboxamide: step 1/1. The sequence is that of Bifunctional purine biosynthesis protein PurH from Chloroflexus aurantiacus (strain ATCC 29366 / DSM 635 / J-10-fl).